Here is a 229-residue protein sequence, read N- to C-terminus: MEGASFGAGRAGAALDPVSFARRPQTLLRVASWVFSIAVFGPIVNEGYVNTDSGPELRCVFNGNAGACRFGVALGLGAFLACAAFLLLDVRFQQISSVRDRRRAVLLDLGFSGLWSFLWFVGFCFLTNQWQRTAPGPATTQAGDAARAAIAFSFFSILSWVALTVKALQRFRLGTDMSLFATEQLSTGASQAYPGYPVGSGVEGTETYQSPPFTETLDTSPKGYQVPAY.

An N-acetylmethionine modification is found at methionine 1. Residues 20–172 (FARRPQTLLR…LTVKALQRFR (153 aa)) enclose the MARVEL domain. 4 helical membrane passes run 30 to 50 (VASWVFSIAVFGPIVNEGYVN), 70 to 90 (FGVALGLGAFLACAAFLLLDV), 105 to 125 (VLLDLGFSGLWSFLWFVGFCF), and 148 to 168 (AAIAFSFFSILSWVALTVKAL). Positions 209–219 (QSPPFTETLDT) are enriched in polar residues. Residues 209-229 (QSPPFTETLDTSPKGYQVPAY) form a disordered region.

The protein belongs to the synaptogyrin family. As to quaternary structure, interacts (via N-terminus) with SLC6A3 (via N-terminus). May interact with VMAT2. As to expression, expressed in brain and placenta.

The protein resides in the cytoplasmic vesicle. The protein localises to the secretory vesicle. It localises to the synaptic vesicle membrane. Its subcellular location is the synapse. May play a role in regulated exocytosis. May indirectly regulate the activity of the plasma membrane dopamine transporter SLC6A3 and thereby regulate dopamine transport back from the synaptic cleft into the presynaptic terminal. This is Synaptogyrin-3 from Homo sapiens (Human).